Here is a 204-residue protein sequence, read N- to C-terminus: Superoxide dismutase [Mn] (204 aa).

4 residues coordinate Mn(2+): His29, His84, Asp167, and His171.

The protein belongs to the iron/manganese superoxide dismutase family. In terms of assembly, homotetramer. It depends on Mn(2+) as a cofactor.

It carries out the reaction 2 superoxide + 2 H(+) = H2O2 + O2. Functionally, destroys superoxide anion radicals which are normally produced within the cells and which are toxic to biological systems. This is Superoxide dismutase [Mn] (sodA) from Thermus thermophilus (strain ATCC BAA-163 / DSM 7039 / HB27).